The sequence spans 162 residues: NADH-quinone oxidoreductase subunit I (162 aa).

4Fe-4S ferredoxin-type domains lie at 53–83 (LRRY…IEAE) and 93–122 (TRYD…ETRI). 8 residues coordinate [4Fe-4S] cluster: Cys63, Cys66, Cys69, Cys73, Cys102, Cys105, Cys108, and Cys112.

The protein belongs to the complex I 23 kDa subunit family. NDH-1 is composed of 14 different subunits. Subunits NuoA, H, J, K, L, M, N constitute the membrane sector of the complex. Requires [4Fe-4S] cluster as cofactor.

It localises to the cell inner membrane. It carries out the reaction a quinone + NADH + 5 H(+)(in) = a quinol + NAD(+) + 4 H(+)(out). In terms of biological role, NDH-1 shuttles electrons from NADH, via FMN and iron-sulfur (Fe-S) centers, to quinones in the respiratory chain. The immediate electron acceptor for the enzyme in this species is believed to be ubiquinone. Couples the redox reaction to proton translocation (for every two electrons transferred, four hydrogen ions are translocated across the cytoplasmic membrane), and thus conserves the redox energy in a proton gradient. This chain is NADH-quinone oxidoreductase subunit I, found in Dechloromonas aromatica (strain RCB).